We begin with the raw amino-acid sequence, 600 residues long: Proline--tRNA ligase (600 aa).

This sequence belongs to the class-II aminoacyl-tRNA synthetase family. ProS type 1 subfamily. In terms of assembly, homodimer.

It localises to the cytoplasm. The enzyme catalyses tRNA(Pro) + L-proline + ATP = L-prolyl-tRNA(Pro) + AMP + diphosphate. Catalyzes the attachment of proline to tRNA(Pro) in a two-step reaction: proline is first activated by ATP to form Pro-AMP and then transferred to the acceptor end of tRNA(Pro). As ProRS can inadvertently accommodate and process non-cognate amino acids such as alanine and cysteine, to avoid such errors it has two additional distinct editing activities against alanine. One activity is designated as 'pretransfer' editing and involves the tRNA(Pro)-independent hydrolysis of activated Ala-AMP. The other activity is designated 'posttransfer' editing and involves deacylation of mischarged Ala-tRNA(Pro). The misacylated Cys-tRNA(Pro) is not edited by ProRS. The chain is Proline--tRNA ligase from Synechococcus sp. (strain ATCC 27144 / PCC 6301 / SAUG 1402/1) (Anacystis nidulans).